The primary structure comprises 305 residues: Triplex capsid protein 2 (305 aa).

The protein belongs to the herpesviridae TRX2 protein family. In terms of assembly, interacts with TRX1 and major capisd protein/MCP.

The protein localises to the virion. It is found in the host nucleus. Functionally, structural component of the T=16 icosahedral capsid. The capsid is composed of pentamers and hexamers of major capsid protein/MCP, which are linked together by heterotrimers called triplexes. These triplexes are formed by a single molecule of triplex protein 1/TRX1 and two copies of triplex protein 2/TRX2. Additionally, TRX1 is required for efficient transport of TRX2 to the nucleus, which is the site of capsid assembly. This is Triplex capsid protein 2 from Homo sapiens (Human).